The chain runs to 480 residues: ATP synthase subunit beta (480 aa).

166 to 173 (GGAGVGKT) contributes to the ATP binding site.

It belongs to the ATPase alpha/beta chains family. In terms of assembly, F-type ATPases have 2 components, CF(1) - the catalytic core - and CF(0) - the membrane proton channel. CF(1) has five subunits: alpha(3), beta(3), gamma(1), delta(1), epsilon(1). CF(0) has three main subunits: a(1), b(2) and c(9-12). The alpha and beta chains form an alternating ring which encloses part of the gamma chain. CF(1) is attached to CF(0) by a central stalk formed by the gamma and epsilon chains, while a peripheral stalk is formed by the delta and b chains.

The protein resides in the cell membrane. The catalysed reaction is ATP + H2O + 4 H(+)(in) = ADP + phosphate + 5 H(+)(out). Functionally, produces ATP from ADP in the presence of a proton gradient across the membrane. The catalytic sites are hosted primarily by the beta subunits. This chain is ATP synthase subunit beta, found in Streptomyces griseus subsp. griseus (strain JCM 4626 / CBS 651.72 / NBRC 13350 / KCC S-0626 / ISP 5235).